A 185-amino-acid polypeptide reads, in one-letter code: ADP-ribosylation factor (185 aa).

The N-myristoyl glycine moiety is linked to residue Gly2. GTP contacts are provided by residues 27–34, 70–74, and 129–132; these read GLDAAGKT, DVGGQ, and NKQD.

Belongs to the small GTPase superfamily. Arf family.

Its subcellular location is the golgi apparatus. Functionally, GTP-binding protein involved in protein trafficking; may modulate vesicle budding and uncoating within the Golgi apparatus. This Neurospora crassa (strain ATCC 24698 / 74-OR23-1A / CBS 708.71 / DSM 1257 / FGSC 987) protein is ADP-ribosylation factor.